The chain runs to 1395 residues: G2/mitotic-specific cyclin-B3 (1395 aa).

Residues 1–59 are disordered; it reads MLLPLPPQSSKPVPKKSQSSKIVPSHHDPSEKTGENCQTKISPSSLQESPSSLQGALKK. Positions 10–23 are enriched in low complexity; the sequence is SKPVPKKSQSSKIV. The segment covering 25–34 has biased composition (basic and acidic residues); sequence SHHDPSEKTG. Over residues 42-54 the composition is skewed to low complexity; sequence SPSSLQESPSSLQ. The D-box signature appears at 60 to 68; it reads RSAFEDLTN. 2 disordered regions span residues 418–464 and 1074–1122; these read LSIK…PTEE and ATMT…DSSD. Over residues 419–431 the composition is skewed to basic and acidic residues; it reads SIKEKPSTEKESF. Over residues 1082–1093 the composition is skewed to low complexity; that stretch reads SRTTTESSACES.

Belongs to the cyclin family. Cyclin AB subfamily. In terms of assembly, interacts with CDK2 kinase. In terms of processing, ubiquitinated. Ubiquitination leads to its degradation during anaphase entry, after degradation of CCNB1. As to expression, testis specific. In testis, it is expressed in developing germ cells, but not in Leydig cells. Weakly or not expressed in other tissues.

The protein resides in the nucleus. Cyclins are positive regulatory subunits of the cyclin-dependent kinases (CDKs), and thereby play an essential role in the control of the cell cycle, notably via their destruction during cell division. Its tissue specificity suggest that it may be required during early meiotic prophase I. This chain is G2/mitotic-specific cyclin-B3 (CCNB3), found in Homo sapiens (Human).